We begin with the raw amino-acid sequence, 273 residues long: MTDSYQMEDIKNSNETSISLQNVTISYGDSDAVRNVYFDIPKYKVTSLIGPSGCGKSTVLRSLNRMNDLISSCTLKGLILFEGLDLYSDQIDPVEVRRKIGMVFQQPNPFPKSIYENIAFGARINGFSGNLDELVEDSLRKAAVWDECKDKLNESGYSLSGGQQQRLCIARTIAIKPDVILMDEPCSALDPISTIKIEETIHELKKNFTIVIVTHNMQQALRVSDKTAFFNAAEKGGTDDGKVGYLVEFDKTKKIFNSPKEKATQDYISGKFG.

Positions 18-257 (ISLQNVTISY…EFDKTKKIFN (240 aa)) constitute an ABC transporter domain. 50–57 (GPSGCGKS) serves as a coordination point for ATP.

Belongs to the ABC transporter superfamily. Phosphate importer (TC 3.A.1.7) family. The complex is composed of two ATP-binding proteins (PstB), two transmembrane proteins (PstC and PstA) and a solute-binding protein (PstS).

Its subcellular location is the cell inner membrane. It catalyses the reaction phosphate(out) + ATP + H2O = ADP + 2 phosphate(in) + H(+). Part of the ABC transporter complex PstSACB involved in phosphate import. Responsible for energy coupling to the transport system. This chain is Phosphate import ATP-binding protein PstB, found in Prochlorococcus marinus (strain SARG / CCMP1375 / SS120).